A 149-amino-acid polypeptide reads, in one-letter code: Large ribosomal subunit protein eL19 (149 aa).

The segment at E46–I99 is disordered. The segment covering S59–S85 has biased composition (basic residues). The span at Q89 to I99 shows a compositional bias: basic and acidic residues.

It belongs to the eukaryotic ribosomal protein eL19 family. As to quaternary structure, part of the 50S ribosomal subunit.

Functionally, binds to the 23S rRNA. The protein is Large ribosomal subunit protein eL19 of Natronomonas pharaonis (strain ATCC 35678 / DSM 2160 / CIP 103997 / JCM 8858 / NBRC 14720 / NCIMB 2260 / Gabara) (Halobacterium pharaonis).